The following is a 1337-amino-acid chain: ATP-dependent helicase/nuclease subunit A (1337 aa).

Residues 3 to 484 (FTPSKEQEPA…LDLSDNYRSR (482 aa)) form the UvrD-like helicase ATP-binding domain. 24-31 (ASAGSGKT) contacts ATP. One can recognise a UvrD-like helicase C-terminal domain in the interval 522-867 (ADRDQASPAT…NVMTIHKSKG (346 aa)).

It belongs to the helicase family. AddA subfamily. In terms of assembly, heterodimer of AddA and AddB/RexB. Mg(2+) is required as a cofactor.

The enzyme catalyses Couples ATP hydrolysis with the unwinding of duplex DNA by translocating in the 3'-5' direction.. It carries out the reaction ATP + H2O = ADP + phosphate + H(+). Its function is as follows. The heterodimer acts as both an ATP-dependent DNA helicase and an ATP-dependent, dual-direction single-stranded exonuclease. Recognizes the chi site generating a DNA molecule suitable for the initiation of homologous recombination. The AddA nuclease domain is required for chi fragment generation; this subunit has the helicase and 3' -&gt; 5' nuclease activities. The protein is ATP-dependent helicase/nuclease subunit A of Limosilactobacillus fermentum (strain NBRC 3956 / LMG 18251) (Lactobacillus fermentum).